Here is a 317-residue protein sequence, read N- to C-terminus: Ribosomal lysine N-methyltransferase 5 (317 aa).

Residues Trp-87, 141–143 (GSG), Asp-163, Trp-214, and Leu-237 contribute to the S-adenosyl-L-methionine site.

Belongs to the class I-like SAM-binding methyltransferase superfamily. RKM5 family.

S-adenosyl-L-methionine-dependent protein-lysine N-methyltransferase that methylates 60S ribosomal protein L1. The protein is Ribosomal lysine N-methyltransferase 5 (RKM5) of Eremothecium gossypii (strain ATCC 10895 / CBS 109.51 / FGSC 9923 / NRRL Y-1056) (Yeast).